Reading from the N-terminus, the 349-residue chain is Phosphoribosylformylglycinamidine cyclo-ligase (349 aa).

The protein belongs to the AIR synthase family.

Its subcellular location is the cytoplasm. The catalysed reaction is 2-formamido-N(1)-(5-O-phospho-beta-D-ribosyl)acetamidine + ATP = 5-amino-1-(5-phospho-beta-D-ribosyl)imidazole + ADP + phosphate + H(+). Its pathway is purine metabolism; IMP biosynthesis via de novo pathway; 5-amino-1-(5-phospho-D-ribosyl)imidazole from N(2)-formyl-N(1)-(5-phospho-D-ribosyl)glycinamide: step 2/2. The polypeptide is Phosphoribosylformylglycinamidine cyclo-ligase (Trichlorobacter lovleyi (strain ATCC BAA-1151 / DSM 17278 / SZ) (Geobacter lovleyi)).